Reading from the N-terminus, the 1013-residue chain is Nucleotide-binding oligomerization domain-containing protein 2 (1013 aa).

2 CARD domains span residues 1-82 (MCSQ…AVQE) and 107-178 (LQSH…HVQK). The short motif at 36 to 50 (WEVLSWEDYEGLRLV) is the ATG16L1-binding motif element. ADP-binding residues include threonine 212, tyrosine 225, threonine 226, glycine 275, serine 276, glycine 277, lysine 278, serine 279, and threonine 280. Positions 214 to 247 (DGAENLCLEDIYTENTLEVRTEVGMAGPLHKSPA) are required for CARD9 binding. An NACHT domain is found at 266–402 (DTVLVVGEAG…RKVLTSRPDA (137 aa)). 272–279 (GEAGSGKS) provides a ligand contact to ATP. Cysteine 368 carries S-palmitoyl cysteine lipidation. Histidine 576 is an ADP binding site. LRR repeat units lie at residues 764 to 785 (RPVA…QLLP), 789 to 812 (ACKA…IEHA), 817 to 838 (QLQK…SVAQ), 845 to 857 (NFLA…NHIT), 873 to 893 (SLQF…QALA), 901 to 922 (SLKW…ALAS), 929 to 949 (ALEE…CSLA), 957 to 978 (SLKV…ALLQ), and 985 to 1005 (TILE…EALS).

It belongs to the NOD1-NOD2 family. As to quaternary structure, homooligomer: homooligomerizes following muramyl dipeptide (MDP)-binding, promoting RIPK2 recruitment. Interacts (via CARD domain) with RIPK2 (via CARD domain). Following RIPK2 recruitment, RIPK2 homooligomerizes via its CARD domain and forms long filaments named RIPosomes. Interacts (via CARD domain) with ubiquitin; inhibiting interaction with RIPK2. Component of a signaling complex consisting of ARHGEF2, NOD2 and RIPK2. Interacts with ANKRD17 (via N-terminus). Interacts with HSPA1A; the interaction enhances NOD2 stability. Interacts (via both CARD domains) with HSP90; the interaction enhances NOD2 stability. Interacts (via CARD domain) with SOCS3; the interaction promotes NOD2 degradation. Interacts (via CARD domain) with ERBIN; the interaction inhibits activation of NOD2. Interacts with MAPKBP1; the interaction is enhanced in the presence of muramyl dipeptide (MDP) and inhibits NOD2 homooligomerization and activation. Interacts with INAVA; the interaction takes place upon Pattern recognition receptor (PRR) stimulation. Interacts (via NACHT domain) with CARD9. Interacts (via CARD domain) with CASP1; this interaction leads to IL1B processing. Also interacts with CASP4. Interacts with NLRP1; this interaction is enhanced in the presence of muramyl dipeptide (MDP) and leads to increased IL1B release. Interacts with NLRP12; this interaction promotes degradation of NOD2 through the ubiquitin-proteasome pathway. Interacts with ANKHD1, C10orf67, CHMP5, DOCK7, ENTR1, KRT15, LDOC1, PPP1R12C, PPP2R3B, TRIM41 and VIM. Interacts with MAVS; interaction takes place following single-stranded RNA (ssRNA)-binding. Interacts with ATG16L1. Interacts with IRGM; promoting IRGM 'Lys-63'-linked polyubiquitination, which is required for interactions with the core autophagy factors. In terms of processing, palmitoylated by ZDHHC5; palmitoylation is required for proper recruitment to the bacterial entry site and hence for proper signaling upon cognate peptidoglycan detection. Palmitoylation promotes localization to the cell membrane. Palmitoylation protects from SQSTM1/p62-dependent autophagic degradation. Polyubiquitinated by TRIM27, leading to proteasome-mediated degradation. Polyubiquitinated and degraded following muramyl dipeptide (MDP) stimulation, conferring MDP tolerance and preventing septic shock. Post-translationally, degraded via selective autophagy following interaction with IRGM. IRGM promotes NOD2-RIPK2 RIPosome recruitment to autophagosome membranes, promoting their SQSTM1/p62-dependent autophagic degradation. In terms of processing, O-glycosylated by OGT, O-GlcNAcylation increases protein stability.

It localises to the cell membrane. It is found in the basolateral cell membrane. The protein localises to the cytoplasm. The protein resides in the mitochondrion. ADP-binding promotes an inactive closed conformation. In terms of biological role, pattern recognition receptor (PRR) that detects bacterial peptidoglycan fragments and other danger signals and plays an important role in gastrointestinal immunity. Specifically activated by muramyl dipeptide (MDP), a fragment of bacterial peptidoglycan found in every bacterial peptidoglycan type. NOD2 specifically recognizes and binds 6-O-phospho-MDP, the phosphorylated form of MDP, which is generated by NAGK. 6-O-phospho-MDP-binding triggers oligomerization that facilitates the binding and subsequent activation of the proximal adapter receptor-interacting RIPK2. Following recruitment, RIPK2 undergoes 'Met-1'- (linear) and 'Lys-63'-linked polyubiquitination by E3 ubiquitin-protein ligases XIAP, BIRC2, BIRC3 and the LUBAC complex, becoming a scaffolding protein for downstream effectors, triggering activation of the NF-kappa-B and MAP kinases signaling. This in turn leads to the transcriptional activation of hundreds of genes involved in immune response. Its ability to detect bacterial MDP plays a central role in maintaining the equilibrium between intestinal microbiota and host immune responses to control inflammation. An imbalance in this relationship results in dysbiosis, whereby pathogenic bacteria prevail on commensals, causing damage in the intestinal epithelial barrier as well as allowing bacterial invasion and inflammation. Acts as a regulator of appetite by sensing MDP in a subset of brain neurons: microbiota-derived MDP reach the brain, where they bind and activate NOD2 in inhibitory hypothalamic neurons, decreasing neuronal activity, thereby regulating satiety and body temperature. NOD2-dependent MDP-sensing of bacterial cell walls in the intestinal epithelial compartment contributes to sustained postnatal growth upon undernutrition. Also plays a role in antiviral response by acting as a sensor of single-stranded RNA (ssRNA) from viruses: upon ssRNA-binding, interacts with MAVS, leading to activation of interferon regulatory factor-3/IRF3 and expression of type I interferon. Also acts as a regulator of autophagy in dendritic cells via its interaction with ATG16L1, possibly by recruiting ATG16L1 at the site of bacterial entry. NOD2 activation in the small intestine crypt also contributes to intestinal stem cells survival and function: acts by promoting mitophagy via its association with ATG16L1. In addition to its main role in innate immunity, also regulates the adaptive immune system by acting as regulator of helper T-cell and regulatory T-cells (Tregs). Besides recognizing pathogens, also involved in the endoplasmic reticulum stress response: acts by sensing and binding to the cytosolic metabolite sphingosine-1-phosphate generated in response to endoplasmic reticulum stress, initiating an inflammation process that leads to activation of the NF-kappa-B and MAP kinases signaling. May also be involved in NLRP1 activation following activation by MDP, leading to CASP1 activation and IL1B release in macrophages. The sequence is that of Nucleotide-binding oligomerization domain-containing protein 2 from Oryctolagus cuniculus (Rabbit).